A 276-amino-acid polypeptide reads, in one-letter code: Formamidopyrimidine-DNA glycosylase (276 aa).

The active-site Schiff-base intermediate with DNA is Pro2. Glu3 acts as the Proton donor in catalysis. The active-site Proton donor; for beta-elimination activity is Lys59. The DNA site is built by His92, Arg111, and Lys155. The FPG-type zinc-finger motif lies at 239-273 (AVYGQTGAPCPRCGTAIEKIKVGGRGTHFCPTCQQ). Residue Arg263 is the Proton donor; for delta-elimination activity of the active site.

It belongs to the FPG family. Monomer. Zn(2+) is required as a cofactor.

It carries out the reaction Hydrolysis of DNA containing ring-opened 7-methylguanine residues, releasing 2,6-diamino-4-hydroxy-5-(N-methyl)formamidopyrimidine.. The catalysed reaction is 2'-deoxyribonucleotide-(2'-deoxyribose 5'-phosphate)-2'-deoxyribonucleotide-DNA = a 3'-end 2'-deoxyribonucleotide-(2,3-dehydro-2,3-deoxyribose 5'-phosphate)-DNA + a 5'-end 5'-phospho-2'-deoxyribonucleoside-DNA + H(+). Its function is as follows. Involved in base excision repair of DNA damaged by oxidation or by mutagenic agents. Acts as a DNA glycosylase that recognizes and removes damaged bases. Has a preference for oxidized purines, such as 7,8-dihydro-8-oxoguanine (8-oxoG). Has AP (apurinic/apyrimidinic) lyase activity and introduces nicks in the DNA strand. Cleaves the DNA backbone by beta-delta elimination to generate a single-strand break at the site of the removed base with both 3'- and 5'-phosphates. The sequence is that of Formamidopyrimidine-DNA glycosylase from Exiguobacterium sibiricum (strain DSM 17290 / CCUG 55495 / CIP 109462 / JCM 13490 / 255-15).